The following is a 306-amino-acid chain: tRNA pseudouridine synthase B (306 aa).

Aspartate 47 serves as the catalytic Nucleophile.

The protein belongs to the pseudouridine synthase TruB family. Type 1 subfamily.

The enzyme catalyses uridine(55) in tRNA = pseudouridine(55) in tRNA. In terms of biological role, responsible for synthesis of pseudouridine from uracil-55 in the psi GC loop of transfer RNAs. This Neisseria meningitidis serogroup A / serotype 4A (strain DSM 15465 / Z2491) protein is tRNA pseudouridine synthase B.